An 882-amino-acid polypeptide reads, in one-letter code: Translation initiation factor IF-2 (882 aa).

The segment at Gly-28 to Gln-296 is disordered. The segment covering Ser-67 to Val-81 has biased composition (polar residues). Residues Val-92–Asp-209 are compositionally biased toward basic and acidic residues. Basic residues predominate over residues Gly-244 to Asn-258. A compositionally biased stretch (basic and acidic residues) spans Lys-259–Ala-272. A tr-type G domain is found at Pro-381–Lys-550. Residues Gly-390–Thr-397 are G1. Gly-390–Thr-397 is a GTP binding site. Residues Gly-415 to His-419 are G2. The G3 stretch occupies residues Asp-436–Gly-439. GTP is bound by residues Asp-436–His-440 and Asn-490–Asp-493. The G4 stretch occupies residues Asn-490–Asp-493. The interval Ser-526 to Lys-528 is G5. N6-acetyllysine is present on Lys-800.

It belongs to the TRAFAC class translation factor GTPase superfamily. Classic translation factor GTPase family. IF-2 subfamily.

Its subcellular location is the cytoplasm. Functionally, one of the essential components for the initiation of protein synthesis. Protects formylmethionyl-tRNA from spontaneous hydrolysis and promotes its binding to the 30S ribosomal subunits. Also involved in the hydrolysis of GTP during the formation of the 70S ribosomal complex. The polypeptide is Translation initiation factor IF-2 (Shigella boydii serotype 4 (strain Sb227)).